An 89-amino-acid polypeptide reads, in one-letter code: Elongation factor 1-beta (89 aa).

This sequence belongs to the EF-1-beta/EF-1-delta family.

Promotes the exchange of GDP for GTP in EF-1-alpha/GDP, thus allowing the regeneration of EF-1-alpha/GTP that could then be used to form the ternary complex EF-1-alpha/GTP/AAtRNA. This chain is Elongation factor 1-beta, found in Methanosarcina barkeri (strain Fusaro / DSM 804).